A 483-amino-acid polypeptide reads, in one-letter code: Threonine synthase-like 2 (483 aa).

An N6-(pyridoxal phosphate)lysine modification is found at Lys113.

Belongs to the threonine synthase family. Pyridoxal 5'-phosphate is required as a cofactor.

Functionally, acts as a catabolic phospho-lyase on both gamma- and beta-phosphorylated substrates. Degrades O-phospho-threonine (PThr) to alpha-ketobutyrate, ammonia and phosphate. Also degrades O-phospho-homoserine (PHS), but this is not its physiological substrate. This is Threonine synthase-like 2 (Thnsl2) from Mus musculus (Mouse).